The primary structure comprises 79 residues: UPF0180 protein BCAH820_1484 (79 aa).

This sequence belongs to the UPF0180 family.

This is UPF0180 protein BCAH820_1484 from Bacillus cereus (strain AH820).